Here is a 357-residue protein sequence, read N- to C-terminus: Peptide chain release factor 1 (357 aa).

Gln-234 is modified (N5-methylglutamine).

This sequence belongs to the prokaryotic/mitochondrial release factor family. Post-translationally, methylated by PrmC. Methylation increases the termination efficiency of RF1.

The protein localises to the cytoplasm. Its function is as follows. Peptide chain release factor 1 directs the termination of translation in response to the peptide chain termination codons UAG and UAA. This chain is Peptide chain release factor 1, found in Lactococcus lactis subsp. cremoris (strain SK11).